Here is a 293-residue protein sequence, read N- to C-terminus: Elongation factor Ts (293 aa).

Positions 80–83 are involved in Mg(2+) ion dislocation from EF-Tu; the sequence is TDFV.

Belongs to the EF-Ts family.

Its subcellular location is the cytoplasm. Associates with the EF-Tu.GDP complex and induces the exchange of GDP to GTP. It remains bound to the aminoacyl-tRNA.EF-Tu.GTP complex up to the GTP hydrolysis stage on the ribosome. The sequence is that of Elongation factor Ts from Paraburkholderia xenovorans (strain LB400).